The following is a 595-amino-acid chain: Protein LUTEIN DEFICIENT 5, chloroplastic (595 aa).

The N-terminal 28 residues, 1–28, are a transit peptide targeting the chloroplast; that stretch reads MAMAFPLSYTPTITVKPVTYSRRSNFVV. Cys-516 serves as a coordination point for heme.

It belongs to the cytochrome P450 family. Heme is required as a cofactor.

Its subcellular location is the plastid. It localises to the chloroplast. Its function is as follows. Heme-containing cytochrome P450 involved in the biosynthesis of xanthophylls. Specific for beta-ring hydroxylation of alpha- and beta-carotene. Also has a low activity toward the epsilon-rings of alpha-carotene. The beta-ring of alpha-carotene is the preferred substrate in planta. This Arabidopsis thaliana (Mouse-ear cress) protein is Protein LUTEIN DEFICIENT 5, chloroplastic (CYP97A3).